A 522-amino-acid chain; its full sequence is Protein nucleotidyltransferase YdiU (522 aa).

Positions 109, 111, 112, 132, 144, 145, 195, and 202 each coordinate ATP. Residue aspartate 271 is the Proton acceptor of the active site. Residues asparagine 272 and aspartate 281 each coordinate Mg(2+). Aspartate 281 is a binding site for ATP.

The protein belongs to the SELO family. It depends on Mg(2+) as a cofactor. Requires Mn(2+) as cofactor.

It catalyses the reaction L-seryl-[protein] + ATP = 3-O-(5'-adenylyl)-L-seryl-[protein] + diphosphate. It carries out the reaction L-threonyl-[protein] + ATP = 3-O-(5'-adenylyl)-L-threonyl-[protein] + diphosphate. The catalysed reaction is L-tyrosyl-[protein] + ATP = O-(5'-adenylyl)-L-tyrosyl-[protein] + diphosphate. The enzyme catalyses L-histidyl-[protein] + UTP = N(tele)-(5'-uridylyl)-L-histidyl-[protein] + diphosphate. It catalyses the reaction L-seryl-[protein] + UTP = O-(5'-uridylyl)-L-seryl-[protein] + diphosphate. It carries out the reaction L-tyrosyl-[protein] + UTP = O-(5'-uridylyl)-L-tyrosyl-[protein] + diphosphate. Functionally, nucleotidyltransferase involved in the post-translational modification of proteins. It can catalyze the addition of adenosine monophosphate (AMP) or uridine monophosphate (UMP) to a protein, resulting in modifications known as AMPylation and UMPylation. The sequence is that of Protein nucleotidyltransferase YdiU from Burkholderia orbicola (strain MC0-3).